A 121-amino-acid polypeptide reads, in one-letter code: Trypsin/alpha-amylase inhibitor CMX1/CMX3 (121 aa).

An N-terminal signal peptide occupies residues 1 to 24; it reads MAFKHQLILSTAILLAVLAAASAS.

The protein belongs to the protease inhibitor I6 (cereal trypsin/alpha-amylase inhibitor) family.

It localises to the secreted. The sequence is that of Trypsin/alpha-amylase inhibitor CMX1/CMX3 from Triticum aestivum (Wheat).